Here is a 101-residue protein sequence, read N- to C-terminus: RNA-3 uncharacterized 11.6 kDa protein (101 aa).

This chain is RNA-3 uncharacterized 11.6 kDa protein, found in Beet necrotic yellow vein mosaic virus (isolate Yugoslavia/G1) (BNYVV).